The chain runs to 179 residues: ATP synthase subunit delta (179 aa).

Belongs to the ATPase delta chain family. In terms of assembly, F-type ATPases have 2 components, F(1) - the catalytic core - and F(0) - the membrane proton channel. F(1) has five subunits: alpha(3), beta(3), gamma(1), delta(1), epsilon(1). F(0) has three main subunits: a(1), b(2) and c(10-14). The alpha and beta chains form an alternating ring which encloses part of the gamma chain. F(1) is attached to F(0) by a central stalk formed by the gamma and epsilon chains, while a peripheral stalk is formed by the delta and b chains.

Its subcellular location is the cell membrane. Functionally, f(1)F(0) ATP synthase produces ATP from ADP in the presence of a proton or sodium gradient. F-type ATPases consist of two structural domains, F(1) containing the extramembraneous catalytic core and F(0) containing the membrane proton channel, linked together by a central stalk and a peripheral stalk. During catalysis, ATP synthesis in the catalytic domain of F(1) is coupled via a rotary mechanism of the central stalk subunits to proton translocation. Its function is as follows. This protein is part of the stalk that links CF(0) to CF(1). It either transmits conformational changes from CF(0) to CF(1) or is implicated in proton conduction. The polypeptide is ATP synthase subunit delta (Clostridium botulinum (strain Loch Maree / Type A3)).